A 351-amino-acid chain; its full sequence is Anthranilate phosphoribosyltransferase (351 aa).

Residues Gly80, Gly83–Asp84, Thr88, Asn90–Thr93, Lys108–Ser116, and Ser120 contribute to the 5-phospho-alpha-D-ribose 1-diphosphate site. Gly80 serves as a coordination point for anthranilate. Ser92 contributes to the Mg(2+) binding site. Asn111 contacts anthranilate. An anthranilate-binding site is contributed by Arg166. Mg(2+) contacts are provided by Asp229 and Glu230.

This sequence belongs to the anthranilate phosphoribosyltransferase family. In terms of assembly, homodimer. Mg(2+) is required as a cofactor.

It catalyses the reaction N-(5-phospho-beta-D-ribosyl)anthranilate + diphosphate = 5-phospho-alpha-D-ribose 1-diphosphate + anthranilate. Its pathway is amino-acid biosynthesis; L-tryptophan biosynthesis; L-tryptophan from chorismate: step 2/5. Its function is as follows. Catalyzes the transfer of the phosphoribosyl group of 5-phosphorylribose-1-pyrophosphate (PRPP) to anthranilate to yield N-(5'-phosphoribosyl)-anthranilate (PRA). The protein is Anthranilate phosphoribosyltransferase of Prosthecochloris aestuarii (strain DSM 271 / SK 413).